A 140-amino-acid chain; its full sequence is Probable glycine cleavage system H protein 3 (140 aa).

The 82-residue stretch at 29-110 folds into the Lipoyl-binding domain; sequence VVSIGVTDLG…PYDSWIVKIR (82 aa). K70 bears the N6-lipoyllysine mark.

This sequence belongs to the GcvH family. The glycine cleavage system is composed of four proteins: P, T, L and H. It depends on (R)-lipoate as a cofactor.

The glycine cleavage system catalyzes the degradation of glycine. The H protein shuttles the methylamine group of glycine from the P protein to the T protein. In Saccharolobus solfataricus (strain ATCC 35092 / DSM 1617 / JCM 11322 / P2) (Sulfolobus solfataricus), this protein is Probable glycine cleavage system H protein 3.